The primary structure comprises 88 residues: Small ribosomal subunit protein bS20 (88 aa).

The protein belongs to the bacterial ribosomal protein bS20 family.

Binds directly to 16S ribosomal RNA. This is Small ribosomal subunit protein bS20 from Legionella pneumophila (strain Paris).